The primary structure comprises 343 residues: Glyceraldehyde-3-phosphate dehydrogenase (343 aa).

Residues 13 to 14 (TI) and Gly111 each bind NAD(+). 140–142 (SCN) is a binding site for D-glyceraldehyde 3-phosphate. Catalysis depends on Cys141, which acts as the Nucleophile. Residue Arg169 participates in NAD(+) binding. 195-196 (HA) lines the D-glyceraldehyde 3-phosphate pocket. Gln302 serves as a coordination point for NAD(+).

This sequence belongs to the glyceraldehyde-3-phosphate dehydrogenase family. Homotetramer.

The protein localises to the cytoplasm. It carries out the reaction D-glyceraldehyde 3-phosphate + phosphate + NADP(+) = (2R)-3-phospho-glyceroyl phosphate + NADPH + H(+). The enzyme catalyses D-glyceraldehyde 3-phosphate + phosphate + NAD(+) = (2R)-3-phospho-glyceroyl phosphate + NADH + H(+). The protein operates within carbohydrate degradation; glycolysis; pyruvate from D-glyceraldehyde 3-phosphate: step 1/5. This chain is Glyceraldehyde-3-phosphate dehydrogenase, found in Hyperthermus butylicus (strain DSM 5456 / JCM 9403 / PLM1-5).